A 144-amino-acid polypeptide reads, in one-letter code: Transcription antitermination protein NusB (144 aa).

The protein belongs to the NusB family.

In terms of biological role, involved in transcription antitermination. Required for transcription of ribosomal RNA (rRNA) genes. Binds specifically to the boxA antiterminator sequence of the ribosomal RNA (rrn) operons. The sequence is that of Transcription antitermination protein NusB from Haemophilus influenzae (strain PittGG).